A 118-amino-acid chain; its full sequence is Acidic phospholipase A2 (118 aa).

Residues Tyr-25, Gly-27, and Gly-29 each contribute to the Ca(2+) site. His-45 is an active-site residue. Asp-46 provides a ligand contact to Ca(2+). The active site involves Asp-86.

The protein belongs to the phospholipase A2 family. Group II subfamily. D49 sub-subfamily. The cofactor is Ca(2+). Post-translationally, six disulfide bonds are present. Expressed by the venom gland.

Its subcellular location is the secreted. It carries out the reaction a 1,2-diacyl-sn-glycero-3-phosphocholine + H2O = a 1-acyl-sn-glycero-3-phosphocholine + a fatty acid + H(+). Its function is as follows. PLA2 catalyzes the calcium-dependent hydrolysis of the 2-acyl groups in 3-sn-phosphoglycerides. This is Acidic phospholipase A2 from Bitis gabonica (Gaboon adder).